A 222-amino-acid polypeptide reads, in one-letter code: Apoptosis regulator OPG045 (222 aa).

This sequence belongs to the orthopoxvirus OPG045 family. Homodimer. Interacts with host pro-apoptotic protein BCL2L11 (via BH3 domain). Interacts with host NLRP1. Interacts with host BAK.

Its subcellular location is the host mitochondrion outer membrane. The protein resides in the host cytoplasm. Plays a role in evading host innate immune response by inhibiting host inflammasome activation. Interacts with and inhibits NLR-mediated interleukin-1 beta/IL1B production in infected cells. At the host mitochondria outer membrane, interacts with the BH3 domain of host BAK and prevents BAK from binding active BAX. In turn, host apoptosis is inhibited. The protein is Apoptosis regulator OPG045 (OPG045) of Homo sapiens (Human).